The following is a 358-amino-acid chain: Heme A synthase 1 (358 aa).

Helical transmembrane passes span 11-31 (LVGT…VGGG), 98-117 (WGRL…RLRG), 123-143 (LTAW…MGWY), 159-179 (LYLG…LWTA), and 199-219 (LLSV…LVAA). Heme is bound at residue histidine 262. The next 3 helical transmembrane spans lie at 264–284 (VAAT…LRAP), 292–312 (LFLL…STLV), and 315–335 (MAEL…ACIA). Histidine 322 is a binding site for heme.

This sequence belongs to the COX15/CtaA family. Type 2 subfamily. As to quaternary structure, interacts with CtaB. Heme b serves as cofactor.

The protein resides in the cell membrane. It carries out the reaction Fe(II)-heme o + 2 A + H2O = Fe(II)-heme a + 2 AH2. It participates in porphyrin-containing compound metabolism; heme A biosynthesis; heme A from heme O: step 1/1. In terms of biological role, catalyzes the conversion of heme O to heme A by two successive hydroxylations of the methyl group at C8. The first hydroxylation forms heme I, the second hydroxylation results in an unstable dihydroxymethyl group, which spontaneously dehydrates, resulting in the formyl group of heme A. This is Heme A synthase 1 from Acidiphilium cryptum (strain JF-5).